Here is a 204-residue protein sequence, read N- to C-terminus: Tat proofreading chaperone DmsD (204 aa).

It belongs to the TorD/DmsD family. DmsD subfamily.

Its function is as follows. Required for biogenesis/assembly of DMSO reductase, but not for the interaction of the DmsA signal peptide with the Tat system. May be part of a chaperone cascade complex that facilitates a folding-maturation pathway for the substrate protein. In Escherichia coli O6:H1 (strain CFT073 / ATCC 700928 / UPEC), this protein is Tat proofreading chaperone DmsD.